The primary structure comprises 377 residues: Succinyl-diaminopimelate desuccinylase (377 aa).

His-66 is a binding site for Zn(2+). Residue Asp-68 is part of the active site. A Zn(2+)-binding site is contributed by Asp-99. Glu-133 functions as the Proton acceptor in the catalytic mechanism. Positions 134, 163, and 349 each coordinate Zn(2+).

This sequence belongs to the peptidase M20A family. DapE subfamily. In terms of assembly, homodimer. Requires Zn(2+) as cofactor. Co(2+) is required as a cofactor.

The catalysed reaction is N-succinyl-(2S,6S)-2,6-diaminopimelate + H2O = (2S,6S)-2,6-diaminopimelate + succinate. It participates in amino-acid biosynthesis; L-lysine biosynthesis via DAP pathway; LL-2,6-diaminopimelate from (S)-tetrahydrodipicolinate (succinylase route): step 3/3. Its function is as follows. Catalyzes the hydrolysis of N-succinyl-L,L-diaminopimelic acid (SDAP), forming succinate and LL-2,6-diaminopimelate (DAP), an intermediate involved in the bacterial biosynthesis of lysine and meso-diaminopimelic acid, an essential component of bacterial cell walls. The polypeptide is Succinyl-diaminopimelate desuccinylase (Legionella pneumophila (strain Corby)).